Reading from the N-terminus, the 103-residue chain is Signal recognition particle 19 kDa protein (103 aa).

Belongs to the SRP19 family. As to quaternary structure, part of the signal recognition particle protein translocation system, which is composed of SRP and FtsY. Archaeal SRP consists of a 7S RNA molecule of 300 nucleotides and two protein subunits: SRP54 and SRP19.

It localises to the cytoplasm. Functionally, involved in targeting and insertion of nascent membrane proteins into the cytoplasmic membrane. Binds directly to 7S RNA and mediates binding of the 54 kDa subunit of the SRP. The polypeptide is Signal recognition particle 19 kDa protein (Methanopyrus kandleri (strain AV19 / DSM 6324 / JCM 9639 / NBRC 100938)).